A 264-amino-acid chain; its full sequence is Cercarial protease (264 aa).

Positions 1–19 (MSNRWRFVVVVTLFTYCLT) are cleaved as a signal peptide. Residues 20–27 (FERVSTWL) constitute a propeptide that is removed on maturation. Residues 28-264 (IRSGEPVQHP…RMLDFVRSNI (237 aa)) form the Peptidase S1 domain. The cysteines at positions 53 and 69 are disulfide-linked. Active-site charge relay system residues include His68 and Asp126. A disulfide bond links Cys192 and Cys202. Ser218 serves as the catalytic Charge relay system.

The protein belongs to the peptidase S1 family. Acetabular (penetration) glands.

With respect to regulation, activated by an autocatalytic mechanism. Its function is as follows. This protease cleaves elastin and thus facilitates penetration of schistosome parasite larvae through elastin-rich tissue of the host. The protein is Cercarial protease of Schistosoma mansoni (Blood fluke).